The sequence spans 308 residues: HPr kinase/phosphorylase (308 aa).

Catalysis depends on residues His138 and Lys159. An ATP-binding site is contributed by 153–160 (GESGLGKS). Ser160 contributes to the Mg(2+) binding site. Asp177 serves as the catalytic Proton acceptor; for phosphorylation activity. Proton donor; for dephosphorylation activity. The important for the catalytic mechanism of both phosphorylation and dephosphorylation stretch occupies residues 201 to 210 (LEVRGLGLLD). Glu202 contributes to the Mg(2+) binding site. Residue Arg243 is part of the active site. Positions 264–269 (QVAAGR) are important for the catalytic mechanism of dephosphorylation.

This sequence belongs to the HPrK/P family. Homohexamer. Requires Mg(2+) as cofactor.

The catalysed reaction is [HPr protein]-L-serine + ATP = [HPr protein]-O-phospho-L-serine + ADP + H(+). The enzyme catalyses [HPr protein]-O-phospho-L-serine + phosphate + H(+) = [HPr protein]-L-serine + diphosphate. Functionally, catalyzes the ATP- as well as the pyrophosphate-dependent phosphorylation of a specific serine residue in HPr, a phosphocarrier protein of the phosphoenolpyruvate-dependent sugar phosphotransferase system (PTS). HprK/P also catalyzes the pyrophosphate-producing, inorganic phosphate-dependent dephosphorylation (phosphorolysis) of seryl-phosphorylated HPr (P-Ser-HPr). The protein is HPr kinase/phosphorylase of Bordetella petrii (strain ATCC BAA-461 / DSM 12804 / CCUG 43448).